The following is a 496-amino-acid chain: Glutamyl-tRNA(Gln) amidotransferase subunit A (496 aa).

Active-site charge relay system residues include lysine 75 and serine 150. Serine 174 acts as the Acyl-ester intermediate in catalysis.

Belongs to the amidase family. GatA subfamily. Heterotrimer of A, B and C subunits.

It catalyses the reaction L-glutamyl-tRNA(Gln) + L-glutamine + ATP + H2O = L-glutaminyl-tRNA(Gln) + L-glutamate + ADP + phosphate + H(+). Functionally, allows the formation of correctly charged Gln-tRNA(Gln) through the transamidation of misacylated Glu-tRNA(Gln) in organisms which lack glutaminyl-tRNA synthetase. The reaction takes place in the presence of glutamine and ATP through an activated gamma-phospho-Glu-tRNA(Gln). The protein is Glutamyl-tRNA(Gln) amidotransferase subunit A of Burkholderia cenocepacia (strain HI2424).